Consider the following 435-residue polypeptide: ATP-dependent protease ATPase subunit HslU (435 aa).

Residues isoleucine 18, 60 to 65 (GVGKTE), aspartate 248, glutamate 313, and arginine 385 each bind ATP.

Belongs to the ClpX chaperone family. HslU subfamily. As to quaternary structure, a double ring-shaped homohexamer of HslV is capped on each side by a ring-shaped HslU homohexamer. The assembly of the HslU/HslV complex is dependent on binding of ATP.

Its subcellular location is the cytoplasm. ATPase subunit of a proteasome-like degradation complex; this subunit has chaperone activity. The binding of ATP and its subsequent hydrolysis by HslU are essential for unfolding of protein substrates subsequently hydrolyzed by HslV. HslU recognizes the N-terminal part of its protein substrates and unfolds these before they are guided to HslV for hydrolysis. This chain is ATP-dependent protease ATPase subunit HslU, found in Ruegeria pomeroyi (strain ATCC 700808 / DSM 15171 / DSS-3) (Silicibacter pomeroyi).